We begin with the raw amino-acid sequence, 728 residues long: Polyribonucleotide nucleotidyltransferase (728 aa).

Residues D509 and D515 each coordinate Mg(2+). A KH domain is found at 576-638; it reads TKIYTFYIPK…TKLKIAILKI (63 aa). The S1 motif domain maps to 648 to 715; that stretch reads GTIYKAKVKN…KFRKIKLSHK (68 aa).

It belongs to the polyribonucleotide nucleotidyltransferase family. Requires Mg(2+) as cofactor.

The protein localises to the cytoplasm. The catalysed reaction is RNA(n+1) + phosphate = RNA(n) + a ribonucleoside 5'-diphosphate. In terms of biological role, involved in mRNA degradation. Catalyzes the phosphorolysis of single-stranded polyribonucleotides processively in the 3'- to 5'-direction. The chain is Polyribonucleotide nucleotidyltransferase from Karelsulcia muelleri (strain GWSS) (Sulcia muelleri).